The following is a 236-amino-acid chain: Ureidoacrylate amidohydrolase RutB (236 aa).

Asp-24 acts as the Proton acceptor in catalysis. Lys-133 is a catalytic residue. Cys-166 functions as the Nucleophile in the catalytic mechanism.

Belongs to the isochorismatase family. RutB subfamily.

It carries out the reaction (Z)-3-ureidoacrylate + H2O + H(+) = (Z)-3-aminoacrylate + NH4(+) + CO2. It catalyses the reaction (Z)-3-ureidoacrylate + H2O = (Z)-3-aminoacrylate + carbamate + H(+). The catalysed reaction is (Z)-2-methylureidoacrylate + H2O + H(+) = (Z)-2-methylaminoacrylate + NH4(+) + CO2. Its function is as follows. Hydrolyzes ureidoacrylate to form aminoacrylate and carbamate. The carbamate hydrolyzes spontaneously, thereby releasing one of the nitrogen atoms of the pyrimidine ring as ammonia and one of its carbon atoms as CO2. The polypeptide is Ureidoacrylate amidohydrolase RutB (Klebsiella variicola (strain At-22)).